The chain runs to 1231 residues: Chromosome-associated kinesin KIF4 (1231 aa).

Residues 9 to 337 enclose the Kinesin motor domain; it reads PVRVALRCRP…LRYADRARKI (329 aa). Residue 88–95 participates in ATP binding; sequence GQTGSGKT. Residues 351–1000 are a coiled coil; the sequence is ELNHLKQQVQ…IKQKLTLLQV (650 aa). Residue S395 is modified to Phosphoserine. T800 is subject to Phosphothreonine. Phosphoserine occurs at positions 802, 811, and 816. The interval 1001–1231 is globular; sequence ASKQKPHLTR…GCSPIQEESH (231 aa). The segment at 1189–1212 is disordered; sequence HPELKSIASESQENKAIGKKKKRA. 2 positions are modified to phosphoserine: S1224 and S1230.

Belongs to the TRAFAC class myosin-kinesin ATPase superfamily. Kinesin family. Chromokinesin subfamily. [2Fe-2S] cluster serves as cofactor. Requires [4Fe-4S] cluster as cofactor. In terms of tissue distribution, expressed in pyramidal cells in juvenile hippocampus, granular cells in juvenile cerebellar cortex and in adult spleen.

It is found in the nucleus. The protein localises to the chromosome. The protein resides in the cytoplasm. It localises to the cytoskeleton. Iron-sulfur (Fe-S) cluster binding motor protein that has a role in chromosome segregation during mitosis. Required for mitotic chromosomal positioning and bipolar spindle stabilization. The sequence is that of Chromosome-associated kinesin KIF4 (Kif4) from Mus musculus (Mouse).